We begin with the raw amino-acid sequence, 257 residues long: Hydroxyacylglutathione hydrolase (257 aa).

Zn(2+) is bound by residues His-54, His-56, Asp-58, His-59, His-113, Asp-137, and His-175.

Belongs to the metallo-beta-lactamase superfamily. Glyoxalase II family. Monomer. Zn(2+) serves as cofactor.

It carries out the reaction an S-(2-hydroxyacyl)glutathione + H2O = a 2-hydroxy carboxylate + glutathione + H(+). It participates in secondary metabolite metabolism; methylglyoxal degradation; (R)-lactate from methylglyoxal: step 2/2. Thiolesterase that catalyzes the hydrolysis of S-D-lactoyl-glutathione to form glutathione and D-lactic acid. In Nostoc punctiforme (strain ATCC 29133 / PCC 73102), this protein is Hydroxyacylglutathione hydrolase.